A 238-amino-acid chain; its full sequence is Phosphoribosylaminoimidazole-succinocarboxamide synthase (238 aa).

Belongs to the SAICAR synthetase family.

It catalyses the reaction 5-amino-1-(5-phospho-D-ribosyl)imidazole-4-carboxylate + L-aspartate + ATP = (2S)-2-[5-amino-1-(5-phospho-beta-D-ribosyl)imidazole-4-carboxamido]succinate + ADP + phosphate + 2 H(+). It participates in purine metabolism; IMP biosynthesis via de novo pathway; 5-amino-1-(5-phospho-D-ribosyl)imidazole-4-carboxamide from 5-amino-1-(5-phospho-D-ribosyl)imidazole-4-carboxylate: step 1/2. The protein is Phosphoribosylaminoimidazole-succinocarboxamide synthase of Persephonella marina (strain DSM 14350 / EX-H1).